A 340-amino-acid polypeptide reads, in one-letter code: Anthranilate phosphoribosyltransferase (340 aa).

5-phospho-alpha-D-ribose 1-diphosphate contacts are provided by residues Gly81, 84–85 (GD), Thr89, 91–94 (NIST), 109–117 (KHGNRNLSS), and Ala121. Gly81 serves as a coordination point for anthranilate. Ser93 provides a ligand contact to Mg(2+). Residue Asn112 coordinates anthranilate. Residue Arg167 coordinates anthranilate. Mg(2+) is bound by residues Asp226 and Glu227.

The protein belongs to the anthranilate phosphoribosyltransferase family. In terms of assembly, homodimer. Mg(2+) is required as a cofactor.

The enzyme catalyses N-(5-phospho-beta-D-ribosyl)anthranilate + diphosphate = 5-phospho-alpha-D-ribose 1-diphosphate + anthranilate. The protein operates within amino-acid biosynthesis; L-tryptophan biosynthesis; L-tryptophan from chorismate: step 2/5. Catalyzes the transfer of the phosphoribosyl group of 5-phosphorylribose-1-pyrophosphate (PRPP) to anthranilate to yield N-(5'-phosphoribosyl)-anthranilate (PRA). The polypeptide is Anthranilate phosphoribosyltransferase (Ruegeria sp. (strain TM1040) (Silicibacter sp.)).